A 908-amino-acid polypeptide reads, in one-letter code: Protein translocase subunit SecA (908 aa).

Residues Q87, 105–109 (GEGKT), and D507 each bind ATP. The tract at residues 860–898 (EALGNAEESDEASDQSVKTFERAGAKVGRNDPCPCGSGK) is disordered. Residues C892, C894, C903, and H904 each contribute to the Zn(2+) site.

The protein belongs to the SecA family. In terms of assembly, monomer and homodimer. Part of the essential Sec protein translocation apparatus which comprises SecA, SecYEG and auxiliary proteins SecDF-YajC and YidC. The cofactor is Zn(2+).

The protein localises to the cell inner membrane. Its subcellular location is the cytoplasm. It carries out the reaction ATP + H2O + cellular proteinSide 1 = ADP + phosphate + cellular proteinSide 2.. In terms of biological role, part of the Sec protein translocase complex. Interacts with the SecYEG preprotein conducting channel. Has a central role in coupling the hydrolysis of ATP to the transfer of proteins into and across the cell membrane, serving both as a receptor for the preprotein-SecB complex and as an ATP-driven molecular motor driving the stepwise translocation of polypeptide chains across the membrane. In Methylobacillus flagellatus (strain ATCC 51484 / DSM 6875 / VKM B-1610 / KT), this protein is Protein translocase subunit SecA.